We begin with the raw amino-acid sequence, 443 residues long: 3-phosphoshikimate 1-carboxyvinyltransferase (443 aa).

The tract at residues 1–22 is disordered; it reads MSHASRPTPLEARGSTPLTGRV. 3-phosphoshikimate is bound by residues K28, S29, and R33. K28 provides a ligand contact to phosphoenolpyruvate. Positions 101 and 129 each coordinate phosphoenolpyruvate. Residues S174, Q176, D326, and K353 each coordinate 3-phosphoshikimate. Residue Q176 coordinates phosphoenolpyruvate. D326 serves as the catalytic Proton acceptor. Phosphoenolpyruvate is bound by residues R357 and R400.

This sequence belongs to the EPSP synthase family. As to quaternary structure, monomer.

Its subcellular location is the cytoplasm. It carries out the reaction 3-phosphoshikimate + phosphoenolpyruvate = 5-O-(1-carboxyvinyl)-3-phosphoshikimate + phosphate. It participates in metabolic intermediate biosynthesis; chorismate biosynthesis; chorismate from D-erythrose 4-phosphate and phosphoenolpyruvate: step 6/7. Its function is as follows. Catalyzes the transfer of the enolpyruvyl moiety of phosphoenolpyruvate (PEP) to the 5-hydroxyl of shikimate-3-phosphate (S3P) to produce enolpyruvyl shikimate-3-phosphate and inorganic phosphate. The chain is 3-phosphoshikimate 1-carboxyvinyltransferase from Afipia carboxidovorans (strain ATCC 49405 / DSM 1227 / KCTC 32145 / OM5) (Oligotropha carboxidovorans).